Consider the following 402-residue polypeptide: Acetate kinase (402 aa).

Asparagine 13 is a binding site for Mg(2+). Position 20 (lysine 20) interacts with ATP. Arginine 94 contacts substrate. Aspartate 151 serves as the catalytic Proton donor/acceptor. Residues 211 to 215 (HLGNG), 285 to 287 (DFR), and 333 to 337 (GVGEN) contribute to the ATP site. Mg(2+) is bound at residue glutamate 387.

Belongs to the acetokinase family. As to quaternary structure, homodimer. Mg(2+) serves as cofactor. Requires Mn(2+) as cofactor.

The protein resides in the cytoplasm. It catalyses the reaction acetate + ATP = acetyl phosphate + ADP. Its pathway is metabolic intermediate biosynthesis; acetyl-CoA biosynthesis; acetyl-CoA from acetate: step 1/2. Catalyzes the formation of acetyl phosphate from acetate and ATP. Can also catalyze the reverse reaction. In Nocardia farcinica (strain IFM 10152), this protein is Acetate kinase.